Consider the following 81-residue polypeptide: Photosystem I iron-sulfur center (81 aa).

4Fe-4S ferredoxin-type domains lie at 1-31 (MSHTVKIYDTCIGCTQCVRACPTDVLEMVPW) and 37-68 (GQIASSPRTEDCVGCKRCETACPTDFLSIRVY). [4Fe-4S] cluster contacts are provided by cysteine 11, cysteine 14, cysteine 17, cysteine 21, cysteine 48, cysteine 51, cysteine 54, and cysteine 58.

As to quaternary structure, the cyanobacterial PSI reaction center is composed of one copy each of PsaA,B,C,D,E,F,I,J,K,L,M and X, and forms trimeric complexes. [4Fe-4S] cluster is required as a cofactor.

Its subcellular location is the cellular thylakoid membrane. The enzyme catalyses reduced [plastocyanin] + hnu + oxidized [2Fe-2S]-[ferredoxin] = oxidized [plastocyanin] + reduced [2Fe-2S]-[ferredoxin]. In terms of biological role, apoprotein for the two 4Fe-4S centers FA and FB of photosystem I (PSI); essential for photochemical activity. FB is the terminal electron acceptor of PSI, donating electrons to ferredoxin. The C-terminus interacts with PsaA/B/D and helps assemble the protein into the PSI complex. Required for binding of PsaD and PsaE to PSI. PSI is a plastocyanin/cytochrome c6-ferredoxin oxidoreductase, converting photonic excitation into a charge separation, which transfers an electron from the donor P700 chlorophyll pair to the spectroscopically characterized acceptors A0, A1, FX, FA and FB in turn. The chain is Photosystem I iron-sulfur center from Acaryochloris marina (strain MBIC 11017).